A 207-amino-acid chain; its full sequence is Small ribosomal subunit protein uS4c (207 aa).

Residues 22–51 are disordered; that stretch reads TQKNCTRDFPPGQHGPKKKGGGNQKTKESQ. The 62-residue stretch at 97–158 folds into the S4 RNA-binding domain; it reads MRLDTIIFRL…NSQNFVKNLL (62 aa).

It belongs to the universal ribosomal protein uS4 family. Part of the 30S ribosomal subunit. Contacts protein S5. The interaction surface between S4 and S5 is involved in control of translational fidelity.

It localises to the plastid. The protein resides in the chloroplast. One of the primary rRNA binding proteins, it binds directly to 16S rRNA where it nucleates assembly of the body of the 30S subunit. Functionally, with S5 and S12 plays an important role in translational accuracy. The chain is Small ribosomal subunit protein uS4c (rps4) from Chlorella vulgaris (Green alga).